The primary structure comprises 812 residues: Hyaluronate lyase HylB (812 aa).

Residues 1–32 (MFGTPSRRTFLTASALSAMALAASPTVTDAIA) constitute a signal peptide (tat-type signal). Active-site residues include Asn222, His272, and Tyr281.

This sequence belongs to the polysaccharide lyase 8 family. Post-translationally, predicted to be exported by the Tat system. The position of the signal peptide cleavage has been experimentally proven.

It localises to the secreted. It carries out the reaction [hyaluronan](n) = n 3-(4-deoxy-beta-D-gluc-4-enuronosyl)-N-acetyl-D-glucosamine + H2O. Functionally, degrades hyaluronic acid (HA) exclusively into HA disaccharides (HA-2). Produced HA-2s confer anti-inflammatory properties leading to reduced immunopathology in the mouse model of acne. In Cutibacterium acnes (Propionibacterium acnes), this protein is Hyaluronate lyase HylB.